A 177-amino-acid chain; its full sequence is Large ribosomal subunit protein uL6 (177 aa).

The protein belongs to the universal ribosomal protein uL6 family. In terms of assembly, part of the 50S ribosomal subunit.

Its function is as follows. This protein binds to the 23S rRNA, and is important in its secondary structure. It is located near the subunit interface in the base of the L7/L12 stalk, and near the tRNA binding site of the peptidyltransferase center. The protein is Large ribosomal subunit protein uL6 of Methylocella silvestris (strain DSM 15510 / CIP 108128 / LMG 27833 / NCIMB 13906 / BL2).